Here is a 38-residue protein sequence, read N- to C-terminus: Histidine decarboxylase small chain (38 aa).

As to quaternary structure, heterohexamer of 3 large and 3 small chains. It depends on pyruvate as a cofactor.

It carries out the reaction L-histidine + H(+) = histamine + CO2. This Micrococcus sp protein is Histidine decarboxylase small chain.